The primary structure comprises 427 residues: MSKIVDILAREILDSRGNPTVQAEVILDSGAEGSAMVPSGASTGAREAIELRDGDASRYGGKGVLKAVENVRGPIKAALTGMDAADQAAIDRRLIELDGSDNKGVLGANAILAVSLATAHAAAADAKKPLYAYLNRSGEFLLPVPMMNIINGGAHADNSIDMQEFMILPVGAPSFREALRYGAEVFHALKKVLSDRGLATGVGDEGGFAPNLPSNEAAIGIILEAIEKAGYRPGEDICLGLDVASSEFYSDGIYTLASEGRRFTSEEFSDHLAAWVDKYPIVSIEDGMAENDWHGWGIHTDRLGRRIQLVGDDLFVTNPAILKQGIEARIANSILIKVNQIGTLTETLEAIHIARKAGYTSVVSHRSGETEGTTIADIAVATCTGQIKTGSLSRSDRIAKYNRLLKIEEELGDKARYGGRGAVKNLA.

Gln163 is a binding site for (2R)-2-phosphoglycerate. Glu205 serves as the catalytic Proton donor. Residues Asp242, Glu285, and Asp312 each coordinate Mg(2+). Positions 337, 366, 367, and 388 each coordinate (2R)-2-phosphoglycerate. Catalysis depends on Lys337, which acts as the Proton acceptor.

This sequence belongs to the enolase family. In terms of assembly, component of the RNA degradosome, a multiprotein complex involved in RNA processing and mRNA degradation. The cofactor is Mg(2+).

The protein localises to the cytoplasm. It localises to the secreted. It is found in the cell surface. It carries out the reaction (2R)-2-phosphoglycerate = phosphoenolpyruvate + H2O. The protein operates within carbohydrate degradation; glycolysis; pyruvate from D-glyceraldehyde 3-phosphate: step 4/5. In terms of biological role, catalyzes the reversible conversion of 2-phosphoglycerate (2-PG) into phosphoenolpyruvate (PEP). It is essential for the degradation of carbohydrates via glycolysis. In Methylococcus capsulatus (strain ATCC 33009 / NCIMB 11132 / Bath), this protein is Enolase 2.